Here is a 377-residue protein sequence, read N- to C-terminus: Palmitoyltransferase ZDHHC16 (377 aa).

Residues 1–79 (MRGQWSLLLG…WLVDNVIRWC (79 aa)) lie on the Cytoplasmic side of the membrane. Residues 80–100 (GVVFVVLVIVLTSSIVAIAYL) form a helical membrane-spanning segment. Residues 101–116 (CVLPLILQTYSVPRLC) are Lumenal-facing. The helical transmembrane segment at 117 to 137 (WHFFYSHWNLILIVFHYYQAI) threads the bilayer. Residues 138–198 (TTPPGYPPQG…NNCVGHYNHR (61 aa)) lie on the Cytoplasmic side of the membrane. The DHHC domain occupies 155-205 (SICKKCINPKPARTHHCSICNRCVLKMDHHCPWLNNCVGHYNHRYFFSFCF). C185 (S-palmitoyl cysteine intermediate) is an active-site residue. Residues 199-219 (YFFSFCFFMTLGCVYCSYGSW) form a helical membrane-spanning segment. The Lumenal segment spans residues 220–266 (DLFREAYAAIEKMKQLDKNKLQAVANQTYHQTPPPTFSFRERVTHKS). Residues 267–287 (LVYLWFLCSSVALALGALTIW) form a helical membrane-spanning segment. At 288–377 (HAVLISRGET…TAHSASVMAV (90 aa)) the chain is on the cytoplasmic side.

It belongs to the DHHC palmitoyltransferase family. As to quaternary structure, interacts with ABL1. Interacts with COPS5/JAB1.

It is found in the endoplasmic reticulum membrane. It catalyses the reaction L-cysteinyl-[protein] + hexadecanoyl-CoA = S-hexadecanoyl-L-cysteinyl-[protein] + CoA. Functionally, palmitoyl acyltransferase that mediates palmitoylation of proteins such as PLN and ZDHHC6. Required during embryonic heart development and cardiac function, possibly by mediating palmitoylation of PLN, thereby affecting PLN phosphorylation and homooligomerization. Also required for eye development. Palmitoylates ZDHHC6, affecting the quaternary assembly of ZDHHC6, its localization, stability and function. May play a role in DNA damage response. May be involved in apoptosis regulation. Involved in the proliferation of neural stem cells by regulating the FGF/ERK pathway. The protein is Palmitoyltransferase ZDHHC16 of Bos taurus (Bovine).